A 348-amino-acid polypeptide reads, in one-letter code: Dihydroorotase (348 aa).

Histidine 17 and histidine 19 together coordinate Zn(2+). Substrate is bound by residues histidine 19–arginine 21 and asparagine 45. 3 residues coordinate Zn(2+): lysine 103, histidine 140, and histidine 178. Lysine 103 carries the N6-carboxylysine modification. Histidine 140 is a substrate binding site. A substrate-binding site is contributed by leucine 223. Aspartate 251 lines the Zn(2+) pocket. Aspartate 251 is a catalytic residue. Substrate is bound by residues histidine 255 and alanine 267.

The protein belongs to the metallo-dependent hydrolases superfamily. DHOase family. Class II DHOase subfamily. As to quaternary structure, homodimer. It depends on Zn(2+) as a cofactor.

It catalyses the reaction (S)-dihydroorotate + H2O = N-carbamoyl-L-aspartate + H(+). The protein operates within pyrimidine metabolism; UMP biosynthesis via de novo pathway; (S)-dihydroorotate from bicarbonate: step 3/3. Catalyzes the reversible cyclization of carbamoyl aspartate to dihydroorotate. This Shigella sonnei (strain Ss046) protein is Dihydroorotase.